The chain runs to 76 residues: Small ribosomal subunit protein bS18 (76 aa).

The protein belongs to the bacterial ribosomal protein bS18 family. As to quaternary structure, part of the 30S ribosomal subunit. Forms a tight heterodimer with protein bS6.

In terms of biological role, binds as a heterodimer with protein bS6 to the central domain of the 16S rRNA, where it helps stabilize the platform of the 30S subunit. This is Small ribosomal subunit protein bS18 from Stenotrophomonas maltophilia (strain R551-3).